Reading from the N-terminus, the 1319-residue chain is DNA-directed RNA polymerase subunit beta' (1319 aa).

Zn(2+)-binding residues include C60, C62, C75, and C78. The Mg(2+) site is built by D535, D537, and D539. Positions 890, 971, 978, and 981 each coordinate Zn(2+).

Belongs to the RNA polymerase beta' chain family. As to quaternary structure, the RNAP catalytic core consists of 2 alpha, 1 beta, 1 beta' and 1 omega subunit. When a sigma factor is associated with the core the holoenzyme is formed, which can initiate transcription. The cofactor is Mg(2+). Requires Zn(2+) as cofactor.

It carries out the reaction RNA(n) + a ribonucleoside 5'-triphosphate = RNA(n+1) + diphosphate. DNA-dependent RNA polymerase catalyzes the transcription of DNA into RNA using the four ribonucleoside triphosphates as substrates. In Mycobacteroides abscessus (strain ATCC 19977 / DSM 44196 / CCUG 20993 / CIP 104536 / JCM 13569 / NCTC 13031 / TMC 1543 / L948) (Mycobacterium abscessus), this protein is DNA-directed RNA polymerase subunit beta'.